The sequence spans 532 residues: MDLAVRKMTLEGLGVSQLGAVHENLPPARLVEASVRRREGMLAENGALVCLTGKRTGRSPKDRFIVENGLTRGPVDWGPVNKPFPGERFERLLAKASAYLENLEEVYVVDAYAGADPRYRLNVQVVCEYAWQALFTRQLFRRPSREELDAFEPDWTVISVPGLLTDPEEDGTESETFVGIDFGRRVVLICGTRYAGEIKKSIFSVLNFVLPTEHGVFPMHCSANVGPGGDVALFFGLSGTGKTTLSSDPERYLIGDDEHGWSDEGIFNFEGGCYAKCIDLSREKEPQIYDAIRFGAVLENVVVDRITRRVDYSDASLTENTRAAYPLEYIEGAVDSGRAGHPAAVLFLTADAFGVLPPISVLSPEQAAYYFLSGYTAKLAGTEADMEADVEATFSACFGAPFLPLPATTYAAMLSEKLREHGSRCYLINTGWSGGPYGVGERVDIAATRQMVRAVIAGNIDESKTYTDPFFGLQVPLEVPGVPSGILNPRETWADRAAYDDQAAKLADLFRENFKKFEDGVPEGVRKAGPNV.

Substrate contacts are provided by Arg58, Tyr194, and Lys200. ATP contacts are provided by residues Lys200, His220, and 236-244 (GLSGTGKTT). 2 residues coordinate Mn(2+): Lys200 and His220. A Mn(2+)-binding site is contributed by Asp257. ATP is bound by residues Glu285, Arg322, 442–443 (RV), and Thr448. Residue Arg322 coordinates substrate.

It belongs to the phosphoenolpyruvate carboxykinase (ATP) family. It depends on Mn(2+) as a cofactor.

Its subcellular location is the cytoplasm. The catalysed reaction is oxaloacetate + ATP = phosphoenolpyruvate + ADP + CO2. The protein operates within carbohydrate biosynthesis; gluconeogenesis. Involved in the gluconeogenesis. Catalyzes the conversion of oxaloacetate (OAA) to phosphoenolpyruvate (PEP) through direct phosphoryl transfer between the nucleoside triphosphate and OAA. This Rubrobacter xylanophilus (strain DSM 9941 / JCM 11954 / NBRC 16129 / PRD-1) protein is Phosphoenolpyruvate carboxykinase (ATP).